The sequence spans 630 residues: Alpha-1,3-mannosyltransferase MNT3 (630 aa).

Topologically, residues 1–14 are cytoplasmic; it reads MLKSLKSRRLILKR. A helical; Signal-anchor for type II membrane protein membrane pass occupies residues 15–31; it reads LVTLLLSLFFSYLIFSA. The Lumenal portion of the chain corresponds to 32 to 630; that stretch reads SRNVTSSNKL…NDISRTWNAN (599 aa). N-linked (GlcNAc...) asparagine glycosylation is found at asparagine 34 and asparagine 168.

It belongs to the MNN1/MNT family.

It is found in the golgi apparatus membrane. The protein operates within protein modification; protein glycosylation. Its function is as follows. Mannosyltransferase involved in adding the 4th and 5th mannose residues of O-linked glycans. The protein is Alpha-1,3-mannosyltransferase MNT3 (MNT3) of Saccharomyces cerevisiae (strain ATCC 204508 / S288c) (Baker's yeast).